The chain runs to 937 residues: MIPPNINVLIRSICINLVTSLPLNFAYIFIHFAVNALREIKRSLIDPMRNLSNWAKGDPCNSNWTGIICFGRSHNDGHFHVRELQLMRLNLSGELAPEVGQLLYLEILDVMWNNLTGRIPLEIGRISSLKLLLLNGNKFTGSLPPELGNLQNLNRLQVDENNITGSVPFSFGNLRSIKHLHLNNNTISGEIPVELSKLPKLVHMILDNNNLTGTLPLELAQLPSLTILQLDNNNFEGSTIPEAYGHFSRLVKLSLRNCGLQGSIPDLSRIENLSYLDLSWNHLTGTIPESKLSDNMTTIELSYNHLTGSIPQSFSDLNSLQLLSLENNSLSGSVPTEIWQDKSFENNKLQVYDLNNNFSDATGNLRTPDNVTLYLRGNPICKSTSIPMVTQFFEYICGEKKQTSTNSNTPCSNVSCPFENVKVSPGICLCTAPLSIDYRLKSPSFFFFTPYIERQFREYITSSLQLETHQLAIDRLVDENRLRPRMYLKLVPKGRITFNKSEVIRIRDRFMSWSFNKTDFFGPYELLDFPLQGPYADLLAQTSGIRTIVWMMIVAGSVVAATVLSVTATLLYVRKRRENSHTLTKKRVFRTISREIKGVKKFSFVELSDATNGFDSSTLIGRGSYGKVYKGILSNKTEVAIKRGEETSLQSEKEFLNEIDLLSRLHHRNLVSLIGYSSDIGEQMLVYEYMPNGNVRDWLSANAADTLSFSMRSHVALGSAKGILYLHTEANPPVIHRDIKTSNILLDCQLHAKVADFGLSRLAPAFGEGDGEPAHVSTVVRGTPGYLDPEYFMTQQLTVRSDVYSFGVVLLELLTGMHPFFEGTHIIREVRTANECGTVLSVADSRMGQCSPDKVKKLAELALWCCEDRPETRPPMSKVVKELEGICQSVREPEMFSETTKLLCSKTSPSSSSVPSPLSLLPGSNLDSGFFHAVKPR.

The N-terminal stretch at 1–20 (MIPPNINVLIRSICINLVTS) is a signal peptide. At 21 to 547 (LPLNFAYIFI…LLAQTSGIRT (527 aa)) the chain is on the extracellular side. N-linked (GlcNAc...) asparagine glycans are attached at residues Asn50, Asn63, Asn90, and Asn114. LRR repeat units follow at residues 102–126 (LLYL…IGRI), 127–150 (SSLK…LGNL), 152–173 (NLNR…SFGN), 174–198 (LRSI…LSKL), 200–222 (KLVH…LAQL), 223–249 (PSLT…HFSR), 251–270 (VKLS…LSRI), and 271–294 (ENLS…KLSD). N-linked (GlcNAc...) asparagine glycosylation is found at Asn162, Asn184, and Asn210. Asn272 and Asn295 each carry an N-linked (GlcNAc...) asparagine glycan. LRR repeat units follow at residues 296 to 316 (MTTI…SFSD), 317 to 341 (LNSL…IWQD), and 343 to 360 (SFEN…NFSD). N-linked (GlcNAc...) asparagine glycans are attached at residues Asn327, Asn357, Asn370, Asn413, Asn499, and Asn516. Residues 548 to 568 (IVWMMIVAGSVVAATVLSVTA) traverse the membrane as a helical segment. Residues 569–937 (TLLYVRKRRE…SGFFHAVKPR (369 aa)) are Cytoplasmic-facing. Residues 614–886 (FDSSTLIGRG…SKVVKELEGI (273 aa)) enclose the Protein kinase domain. Residues 620–628 (IGRGSYGKV) and Lys642 contribute to the ATP site. The active-site Proton acceptor is the Asp738.

This sequence belongs to the protein kinase superfamily. Ser/Thr protein kinase family.

It is found in the cell membrane. It carries out the reaction L-seryl-[protein] + ATP = O-phospho-L-seryl-[protein] + ADP + H(+). The enzyme catalyses L-threonyl-[protein] + ATP = O-phospho-L-threonyl-[protein] + ADP + H(+). This chain is Putative leucine-rich repeat receptor-like serine/threonine-protein kinase At3g53590, found in Arabidopsis thaliana (Mouse-ear cress).